Reading from the N-terminus, the 739-residue chain is Transcription regulator protein BACH1 (739 aa).

The region spanning 34–100 (CDVTVLVEGQ…AYTAKLILSK (67 aa)) is the BTB domain. The residue at position 196 (S196) is a Phosphoserine. 2 disordered regions span residues 287-321 (MESE…PHGL) and 344-391 (KTVK…RSSV). Composition is skewed to basic and acidic residues over residues 346-364 (VKTE…KPSE) and 376-391 (PKED…RSSV). S448 is subject to Phosphoserine. The bZIP domain occupies 560–623 (CIHDIRRRSK…GETKQNLTGL (64 aa)). Positions 565-581 (RRRSKNRIAAQRCRKRK) are basic motif. A leucine-zipper region spans residues 585–592 (IQNLESEI). The interval 679 to 708 (PPTAPPPCGRGSSAASQELVQESPPTTAAA) is disordered. Positions 699-708 (QESPPTTAAA) are enriched in low complexity.

Belongs to the bZIP family. CNC subfamily. As to quaternary structure, heterodimer of BACH1 and MAFK. Post-translationally, ubiquitinated by the SCF(FBXL17) complex or by the by the SCF(FBXO22) complex, leading to its degradation by the proteasome. Under oxidative stress, reactive oxygen species covalently modify cysteine residues on the bZIP domain of BACH1 and release it from chromatin. If the BTB domain of BACH1 remains intact, its beta1-alpha6 degron is recognized by FBXO22, promoting its ubiquitination and degradation. If the structural integrity of the beta1-alpha6 degron is compromised, FBXL17 will transiently associate with the BACH1 BTB dimer and remodel it into stably bound monomer for ubiquitination and degradation. In terms of tissue distribution, ubiquitous.

It is found in the nucleus. Transcriptional regulator that acts as a repressor or activator, depending on the context. Binds to NF-E2 DNA binding sites. Plays important roles in coordinating transcription activation and repression by MAFK. Together with MAF, represses the transcription of genes under the control of the NFE2L2 oxidative stress pathway. The chain is Transcription regulator protein BACH1 (Bach1) from Mus musculus (Mouse).